A 459-amino-acid chain; its full sequence is MDITKGSLDEIARPASSSRSRPGSRVSTSLSTEKPKRSSTSLSLEILNPEPGFSEMPSQLCLGLETCETHLEAGRKTPIEHHDQLLGQKHFSKNSAEDYECHRRDEINFDHPFPQKEIDLLSHESEDEFLDLPSAEFEDACENDEDPKDDQDIADDKAIDPKMERAIKRMQALDDILQRKLAKEKEVKAQGLEIRIKLWEELQRATIQSSARSHEENMNTSKFLALTPQLDEMEDAASVQMCNIFSPVFPTQLPNEDPVEDDDHKTLQGNMTGADSSDRSDCKTRHSKGQKKEVDFIQRNIELAKDAGAYILLMDDEKLRLEQLLEDIQEGCSDEDITGDVSGWIVPGEGYTPEPDEYDQLAEIDSRLQMVRCSEESLETSLSDSRILKEVFQEVLLEKNGNSDSAPGEQVLRNTKELRDQKMRLREIDQQLQDMERNSITPMSLVSRYSFSADSPVYA.

Residues 1 to 54 (MDITKGSLDEIARPASSSRSRPGSRVSTSLSTEKPKRSSTSLSLEILNPEPGFS) form a disordered region. The segment covering 13-29 (RPASSSRSRPGSRVSTS) has biased composition (low complexity). The stretch at 162 to 202 (KMERAIKRMQALDDILQRKLAKEKEVKAQGLEIRIKLWEEL) forms a coiled coil. Residues 252–289 (QLPNEDPVEDDDHKTLQGNMTGADSSDRSDCKTRHSKG) are disordered. The segment covering 276–289 (SSDRSDCKTRHSKG) has biased composition (basic and acidic residues).

This sequence belongs to the FSIP1 family.

This is Fibrous sheath-interacting protein 1 (fsip1) from Xenopus laevis (African clawed frog).